Consider the following 495-residue polypeptide: Fibronectin type III and SPRY domain-containing protein 1 (495 aa).

Residues 4–99 (QKESLRKIIT…ALESSEELLE (96 aa)) adopt a coiled-coil conformation. The 58-residue stretch at 105-162 (LCSSENDSFTQAAKDIKDSVTMAPAFRLSLKAKASDSMNHMMVDFTHERNLLQSITFL) folds into the COS domain. The region spanning 164–268 (VPATPEIHVA…EPVTLETHAF (105 aa)) is the Fibronectin type-III domain. In terms of domain architecture, B30.2/SPRY spans 281–476 (LKVEDLSVEW…VQTGLQVPSI (196 aa)). Residues 306–332 (KNRTNSPMHSPARTAMMSPKRAPSARV) form a disordered region. Ser490 is subject to Phosphoserine.

In terms of assembly, oligomerization is required for binding to microtubules.

The protein resides in the cytoplasm. It is found in the cytoskeleton. It localises to the microtubule organizing center. Its subcellular location is the centrosome. The protein localises to the nucleus. The protein resides in the cleavage furrow. Its function is as follows. May be involved in microtubule organization and stabilization. This Danio rerio (Zebrafish) protein is Fibronectin type III and SPRY domain-containing protein 1 (fsd1).